The chain runs to 477 residues: Ankyrin repeat, SAM and basic leucine zipper domain-containing protein 1 (477 aa).

The disordered stretch occupies residues 1–24; it reads MAASSLWGPAVAGGGESSESEDDG. Phosphoserine occurs at positions 17, 18, and 20. ANK repeat units lie at residues 45–74, 78–107, 110–144, 148–177, 181–210, and 214–243; these read EKNEMFKKALTTGDTSLVEELLNAGISVDS, YGWTPLMFAASIANVNLVRVLLNRGANASF, DKQTVLMTACSARGSQEQIIKCVELLLSRNADPNV, RQMTPIMYAARGGHPQVVALLVAHGAEVNA, NGYTALTWAAYQGHKNVILKLLELGANKML, and DGKTPSEIANRNKHPEIFSLLSLTLNPLEG. The SAM domain maps to 272–334; it reads SYTAFGELDL…KILSALKELM (63 aa).

In terms of assembly, interacts with DDX4, PIWIL1, RANBP9 and TDRD1.

Its subcellular location is the cytoplasm. Plays a central role during spermatogenesis by repressing transposable elements and preventing their mobilization, which is essential for the germline integrity. Acts via the piRNA metabolic process, which mediates the repression of transposable elements during meiosis by forming complexes composed of piRNAs and Piwi proteins and governs the methylation and subsequent repression of transposons. Its association with pi-bodies suggests a participation in the primary piRNAs metabolic process. Required prior to the pachytene stage to facilitate the production of multiple types of piRNAs, including those associated with repeats involved in the regulation of retrotransposons. May act by mediating protein-protein interactions during germ cell maturation. In Echinops telfairi (Lesser hedgehog tenrec), this protein is Ankyrin repeat, SAM and basic leucine zipper domain-containing protein 1 (ASZ1).